The sequence spans 411 residues: MKKWQNIRKVVLAYSGGLDTSIILKWLQSTLDAEVVTFTADLGQGEELELARRKAEMLGVKEIYIEDLREEFVRDFVFPMFRANTVYEGAYLLGTSIARPLISKRLIEIAKETGADAIAHGATGKGNDQVRFELSAYALNPDIKIIAPWRDWDFKSRTDLFEFARMHQIPVEKDQQGEAPFSVDANLLHSSSEGKILENPALPAPEYVHIRTLSPEDAPDQATRITLGFKKGDAVSINGKNLSPATLLAELNRYGRDNGIGRLDLVENRFVGMKSRGFYETPGGTILLAAHRAIESLTLDRGAAHLKDELMPRYAELIYYGFWFSPERKMLQAAIDLSQEHVEGEVTLKLYKGNVIVEGRQSKKSLYSSELVTFEDDQGAYDQRDATGFIKLNALRLRTLARRCQGNQEKK.

Residues 13 to 21 (AYSGGLDTS) and alanine 40 each bind ATP. L-citrulline-binding residues include tyrosine 91 and serine 96. Glycine 121 serves as a coordination point for ATP. L-aspartate is bound by residues threonine 123, asparagine 127, and aspartate 128. Asparagine 127 serves as a coordination point for L-citrulline. L-citrulline contacts are provided by arginine 131, serine 182, serine 191, glutamate 267, and tyrosine 279.

The protein belongs to the argininosuccinate synthase family. Type 1 subfamily. As to quaternary structure, homotetramer.

It localises to the cytoplasm. The catalysed reaction is L-citrulline + L-aspartate + ATP = 2-(N(omega)-L-arginino)succinate + AMP + diphosphate + H(+). Its pathway is amino-acid biosynthesis; L-arginine biosynthesis; L-arginine from L-ornithine and carbamoyl phosphate: step 2/3. The sequence is that of Argininosuccinate synthase from Bartonella tribocorum (strain CIP 105476 / IBS 506).